The primary structure comprises 491 residues: Glutamyl-tRNA(Gln) amidotransferase subunit A (491 aa).

Catalysis depends on charge relay system residues lysine 79 and serine 154. Serine 178 functions as the Acyl-ester intermediate in the catalytic mechanism.

It belongs to the amidase family. GatA subfamily. Heterotrimer of A, B and C subunits.

It carries out the reaction L-glutamyl-tRNA(Gln) + L-glutamine + ATP + H2O = L-glutaminyl-tRNA(Gln) + L-glutamate + ADP + phosphate + H(+). Its function is as follows. Allows the formation of correctly charged Gln-tRNA(Gln) through the transamidation of misacylated Glu-tRNA(Gln) in organisms which lack glutaminyl-tRNA synthetase. The reaction takes place in the presence of glutamine and ATP through an activated gamma-phospho-Glu-tRNA(Gln). The sequence is that of Glutamyl-tRNA(Gln) amidotransferase subunit A from Alkaliphilus metalliredigens (strain QYMF).